We begin with the raw amino-acid sequence, 157 residues long: Ribosomal RNA large subunit methyltransferase H (157 aa).

Residues Leu-73, Gly-105, and 124-129 contribute to the S-adenosyl-L-methionine site; that span reads LSRMTF.

Belongs to the RNA methyltransferase RlmH family. As to quaternary structure, homodimer.

The protein resides in the cytoplasm. The catalysed reaction is pseudouridine(1915) in 23S rRNA + S-adenosyl-L-methionine = N(3)-methylpseudouridine(1915) in 23S rRNA + S-adenosyl-L-homocysteine + H(+). Functionally, specifically methylates the pseudouridine at position 1915 (m3Psi1915) in 23S rRNA. The protein is Ribosomal RNA large subunit methyltransferase H of Porphyromonas gingivalis (strain ATCC BAA-308 / W83).